Reading from the N-terminus, the 316-residue chain is Phosphate acyltransferase (316 aa).

It belongs to the PlsX family. Homodimer. Probably interacts with PlsY.

It localises to the cytoplasm. It catalyses the reaction a fatty acyl-[ACP] + phosphate = an acyl phosphate + holo-[ACP]. The protein operates within lipid metabolism; phospholipid metabolism. Its function is as follows. Catalyzes the reversible formation of acyl-phosphate (acyl-PO(4)) from acyl-[acyl-carrier-protein] (acyl-ACP). This enzyme utilizes acyl-ACP as fatty acyl donor, but not acyl-CoA. This chain is Phosphate acyltransferase, found in Chlamydia caviae (strain ATCC VR-813 / DSM 19441 / 03DC25 / GPIC) (Chlamydophila caviae).